A 62-amino-acid polypeptide reads, in one-letter code: Putative antitoxin AF_1095 (62 aa).

This sequence belongs to the UPF0165 family.

Functionally, possibly the antitoxin component of a type II toxin-antitoxin (TA) system. The sequence is that of Putative antitoxin AF_1095 from Archaeoglobus fulgidus (strain ATCC 49558 / DSM 4304 / JCM 9628 / NBRC 100126 / VC-16).